Consider the following 236-residue polypeptide: Small ribosomal subunit protein uS2c (236 aa).

It belongs to the universal ribosomal protein uS2 family.

The protein localises to the plastid. The protein resides in the chloroplast. The chain is Small ribosomal subunit protein uS2c (rps2) from Citrus sinensis (Sweet orange).